The chain runs to 491 residues: Glutamyl-tRNA(Gln) amidotransferase subunit A (491 aa).

Residues Lys79 and Ser158 each act as charge relay system in the active site. The active-site Acyl-ester intermediate is the Ser182.

The protein belongs to the amidase family. GatA subfamily. As to quaternary structure, heterotrimer of A, B and C subunits.

It carries out the reaction L-glutamyl-tRNA(Gln) + L-glutamine + ATP + H2O = L-glutaminyl-tRNA(Gln) + L-glutamate + ADP + phosphate + H(+). Functionally, allows the formation of correctly charged Gln-tRNA(Gln) through the transamidation of misacylated Glu-tRNA(Gln) in organisms which lack glutaminyl-tRNA synthetase. The reaction takes place in the presence of glutamine and ATP through an activated gamma-phospho-Glu-tRNA(Gln). The chain is Glutamyl-tRNA(Gln) amidotransferase subunit A from Anaplasma phagocytophilum (strain HZ).